A 331-amino-acid chain; its full sequence is Lipoyl synthase (331 aa).

Over residues 1–14 (MSTQLDASQPSNDV) the composition is skewed to polar residues. Positions 1–32 (MSTQLDASQPSNDVASPAAYDPTQKQKSQAKT) are disordered. [4Fe-4S] cluster contacts are provided by cysteine 78, cysteine 83, cysteine 89, cysteine 104, cysteine 108, cysteine 111, and serine 318. Positions 89-307 (CFGKGTATFM…EREAYAMGFS (219 aa)) constitute a Radical SAM core domain.

Belongs to the radical SAM superfamily. Lipoyl synthase family. [4Fe-4S] cluster is required as a cofactor.

It localises to the cytoplasm. The catalysed reaction is [[Fe-S] cluster scaffold protein carrying a second [4Fe-4S](2+) cluster] + N(6)-octanoyl-L-lysyl-[protein] + 2 oxidized [2Fe-2S]-[ferredoxin] + 2 S-adenosyl-L-methionine + 4 H(+) = [[Fe-S] cluster scaffold protein] + N(6)-[(R)-dihydrolipoyl]-L-lysyl-[protein] + 4 Fe(3+) + 2 hydrogen sulfide + 2 5'-deoxyadenosine + 2 L-methionine + 2 reduced [2Fe-2S]-[ferredoxin]. It participates in protein modification; protein lipoylation via endogenous pathway; protein N(6)-(lipoyl)lysine from octanoyl-[acyl-carrier-protein]: step 2/2. In terms of biological role, catalyzes the radical-mediated insertion of two sulfur atoms into the C-6 and C-8 positions of the octanoyl moiety bound to the lipoyl domains of lipoate-dependent enzymes, thereby converting the octanoylated domains into lipoylated derivatives. In Bordetella avium (strain 197N), this protein is Lipoyl synthase.